The primary structure comprises 308 residues: Probable 5-dehydro-4-deoxyglucarate dehydratase (308 aa).

It belongs to the DapA family.

It catalyses the reaction 5-dehydro-4-deoxy-D-glucarate + H(+) = 2,5-dioxopentanoate + CO2 + H2O. The protein operates within carbohydrate acid metabolism; D-glucarate degradation; 2,5-dioxopentanoate from D-glucarate: step 2/2. The sequence is that of Probable 5-dehydro-4-deoxyglucarate dehydratase from Bacillus licheniformis (strain ATCC 14580 / DSM 13 / JCM 2505 / CCUG 7422 / NBRC 12200 / NCIMB 9375 / NCTC 10341 / NRRL NRS-1264 / Gibson 46).